We begin with the raw amino-acid sequence, 141 residues long: Hemoglobin subunit alpha (141 aa).

Positions valine 1 to arginine 141 constitute a Globin domain. Serine 3 is modified (phosphoserine). 2 positions are modified to N6-succinyllysine: lysine 7 and lysine 11. Lysine 16 carries the N6-acetyllysine; alternate modification. Lysine 16 is subject to N6-succinyllysine; alternate. The residue at position 24 (tyrosine 24) is a Phosphotyrosine. The residue at position 35 (serine 35) is a Phosphoserine. Lysine 40 carries the post-translational modification N6-succinyllysine. A Phosphoserine modification is found at serine 49. Position 58 (histidine 58) interacts with O2. Residue histidine 87 coordinates heme b. The residue at position 108 (threonine 108) is a Phosphothreonine. Residue serine 124 is modified to Phosphoserine. Threonine 134 and threonine 137 each carry phosphothreonine. Serine 138 is subject to Phosphoserine.

Belongs to the globin family. As to quaternary structure, heterotetramer of two alpha chains and two beta chains. In terms of tissue distribution, red blood cells.

Its function is as follows. Involved in oxygen transport from the lung to the various peripheral tissues. In terms of biological role, hemopressin acts as an antagonist peptide of the cannabinoid receptor CNR1. Hemopressin-binding efficiently blocks cannabinoid receptor CNR1 and subsequent signaling. In Bradypus tridactylus (Pale-throated three-toed sloth), this protein is Hemoglobin subunit alpha (HBA).